Consider the following 92-residue polypeptide: LKMGAMFVLLLLFTLASSQQEGDVQARKTSLKSDFYRALRQYDRQCTLVNNCDRNGERACNGDCSCEGQICKCGYRVSPGKSGCACTCRNAK.

A signal peptide spans 1-19 (LKMGAMFVLLLLFTLASSQ). Positions 20–44 (QEGDVQARKTSLKSDFYRALRQYDR) are excised as a propeptide. Q45 carries the post-translational modification Pyrrolidone carboxylic acid.

This sequence belongs to the conotoxin S superfamily. Contains 5 disulfide bonds. As to expression, expressed by the venom duct.

Its subcellular location is the secreted. This Conus achatinus (Little frog cone) protein is Conotoxin Ac8.1.